A 62-amino-acid polypeptide reads, in one-letter code: uncharacterized protein (62 aa).

Transmembrane regions (helical) follow at residues 9–29 (HNEL…ALIG) and 42–62 (AAVV…LQLL).

The protein localises to the membrane. This is an uncharacterized protein from Saccharomyces cerevisiae (strain ATCC 204508 / S288c) (Baker's yeast).